The sequence spans 194 residues: FMN-dependent NADH:quinone oxidoreductase (194 aa).

FMN-binding positions include Ser10 and 90-93 (MYNL).

It belongs to the azoreductase type 1 family. In terms of assembly, homodimer. Requires FMN as cofactor.

It catalyses the reaction 2 a quinone + NADH + H(+) = 2 a 1,4-benzosemiquinone + NAD(+). The catalysed reaction is N,N-dimethyl-1,4-phenylenediamine + anthranilate + 2 NAD(+) = 2-(4-dimethylaminophenyl)diazenylbenzoate + 2 NADH + 2 H(+). Quinone reductase that provides resistance to thiol-specific stress caused by electrophilic quinones. Its function is as follows. Also exhibits azoreductase activity. Catalyzes the reductive cleavage of the azo bond in aromatic azo compounds to the corresponding amines. This is FMN-dependent NADH:quinone oxidoreductase from Haemophilus influenzae (strain PittEE).